We begin with the raw amino-acid sequence, 388 residues long: D-alanyl-D-alanine carboxypeptidase DacD (388 aa).

The signal sequence occupies residues 1–21 (MKRRLIIAASLFVFNLSSGFA). The active-site Acyl-ester intermediate is Ser-63. Lys-66 serves as the catalytic Proton acceptor. Ser-129 is an active-site residue. Substrate is bound at residue Lys-232.

The protein belongs to the peptidase S11 family.

Its subcellular location is the cell inner membrane. It catalyses the reaction Preferential cleavage: (Ac)2-L-Lys-D-Ala-|-D-Ala. Also transpeptidation of peptidyl-alanyl moieties that are N-acyl substituents of D-alanine.. The protein operates within cell wall biogenesis; peptidoglycan biosynthesis. In terms of biological role, removes C-terminal D-alanyl residues from sugar-peptide cell wall precursors. This is D-alanyl-D-alanine carboxypeptidase DacD (dacD) from Escherichia coli (strain K12).